We begin with the raw amino-acid sequence, 568 residues long: CRISPR-associated exonuclease Cas4/endonuclease Cas1 fusion (568 aa).

The segment at methionine 1–proline 209 is CRISPR-associated exonuclease Cas4. Cysteine 43 lines the [4Fe-4S] cluster pocket. Residues aspartate 95 and glutamate 108 each coordinate Mn(2+). [4Fe-4S] cluster contacts are provided by cysteine 198, cysteine 201, and cysteine 207. Residues valine 232–arginine 568 form a CRISPR-associated endonuclease Cas1 region. Glutamate 390, histidine 459, and glutamate 474 together coordinate Mn(2+).

It in the N-terminal section; belongs to the CRISPR-associated exonuclease Cas4 family. The protein in the C-terminal section; belongs to the CRISPR-associated endonuclease Cas1 family. Homodimer, forms a heterotetramer with a Cas2 homodimer. It depends on [4Fe-4S] cluster as a cofactor. Mg(2+) serves as cofactor. The cofactor is Mn(2+).

The enzyme catalyses exonucleolytic cleavage in the 5'- to 3'-direction to yield nucleoside 3'-phosphates.. CRISPR (clustered regularly interspaced short palindromic repeat), is an adaptive immune system that provides protection against mobile genetic elements (viruses, transposable elements and conjugative plasmids). CRISPR clusters contain spacers, sequences complementary to antecedent mobile elements, and target invading nucleic acids. CRISPR clusters are transcribed and processed into CRISPR RNA (crRNA). The Cas4 region acts as a ssDNA exonuclease, while the Cas1 region acts as a dsDNA endonuclease. Involved in the integration of spacer DNA into the CRISPR cassette. This Myxococcus xanthus (strain DK1622) protein is CRISPR-associated exonuclease Cas4/endonuclease Cas1 fusion (cas4-cas1).